The chain runs to 149 residues: UPF0102 protein Bpro_0391 (149 aa).

A disordered region spans residues 1-30; the sequence is MWFSRKQVVKPPPDGSRAQPGQVTTKSRGD.

This sequence belongs to the UPF0102 family.

This is UPF0102 protein Bpro_0391 from Polaromonas sp. (strain JS666 / ATCC BAA-500).